A 288-amino-acid chain; its full sequence is MRGYLLLLPLLLCLVDNSVSYKPVILVHGLLSSSKSFDKLIQFIKKAHPGTDIYPVDMFNHLKSLNPMWKQVYEIRKYISPIIKNAGLKGVHLICYSQGGLICRGLLETMPEHNVDTFIALSSPLMGQYGMTLYVQKALPLVNISALQEVCYRKFFKEISICGYWRDPHRYEKYLEYSAFLPKLNNELLDSNSTERKRNFLRLRKLVLIGGPDDEVIAPWQSSHFGFYNEKEEVVNMKDQMVYQKDTFGLQSLDGRGAITIYSVPGVLHASWPNNQTVFKNYIEKWLT.

The N-terminal stretch at 1 to 20 is a signal peptide; the sequence is MRGYLLLLPLLLCLVDNSVS. A disulfide bridge links Cys95 with Cys103. Residue Ser97 is the Nucleophile of the active site. N-linked (GlcNAc...) asparagine glycosylation is present at Asn143. Cys151 and Cys162 are joined by a disulfide. N-linked (GlcNAc...) asparagine glycosylation occurs at Asn192. Catalysis depends on residues Asp214 and His269. N-linked (GlcNAc...) asparagine glycosylation occurs at Asn275.

Belongs to the palmitoyl-protein thioesterase family.

It is found in the lysosome. It carries out the reaction hexadecanoyl-CoA + H2O = hexadecanoate + CoA + H(+). The catalysed reaction is S-hexadecanoyl-N-acetylcysteamine + H2O = N-acetylcysteamine + hexadecanoate + H(+). Its function is as follows. Catalyzes the cleavage of thioester bonds from S-palmitoyl-CoA or S-palmitoyl-N-acetylcysteamine (unbranched structures) but does not have activity against palmitoylcysteine or palmitoylated proteins, branched structures or bulky head groups. Conversely, hydrolyzes both long and short chain fatty acyl-CoA substrate. This chain is Lysosomal thioesterase PPT2-B (ppt2-b), found in Xenopus laevis (African clawed frog).